A 581-amino-acid chain; its full sequence is Proline--tRNA ligase (581 aa).

Belongs to the class-II aminoacyl-tRNA synthetase family. ProS type 1 subfamily. As to quaternary structure, homodimer.

Its subcellular location is the cytoplasm. It carries out the reaction tRNA(Pro) + L-proline + ATP = L-prolyl-tRNA(Pro) + AMP + diphosphate. Catalyzes the attachment of proline to tRNA(Pro) in a two-step reaction: proline is first activated by ATP to form Pro-AMP and then transferred to the acceptor end of tRNA(Pro). As ProRS can inadvertently accommodate and process non-cognate amino acids such as alanine and cysteine, to avoid such errors it has two additional distinct editing activities against alanine. One activity is designated as 'pretransfer' editing and involves the tRNA(Pro)-independent hydrolysis of activated Ala-AMP. The other activity is designated 'posttransfer' editing and involves deacylation of mischarged Ala-tRNA(Pro). The misacylated Cys-tRNA(Pro) is not edited by ProRS. The polypeptide is Proline--tRNA ligase (Kosmotoga olearia (strain ATCC BAA-1733 / DSM 21960 / TBF 19.5.1)).